A 146-amino-acid chain; its full sequence is Large ribosomal subunit protein uL24 (146 aa).

A disordered region spans residues 1 to 33 (MKYNPRVTSSRRRNRKPHFTASSSERRVXMSSP). The segment covering 9–18 (SSRRRNRKPH) has biased composition (basic residues).

The protein belongs to the universal ribosomal protein uL24 family.

This is Large ribosomal subunit protein uL24 (RPL26) from Brassica campestris (Field mustard).